The following is a 530-amino-acid chain: Protein P80 (530 aa).

Positions Met-1–Gly-22 are cleaved as a signal peptide. Residues Met-491–Val-511 traverse the membrane as a helical segment.

Belongs to the SLC31A transporter family.

It localises to the late endosome membrane. The chain is Protein P80 (p80) from Dictyostelium discoideum (Social amoeba).